A 156-amino-acid polypeptide reads, in one-letter code: Small ribosomal subunit protein uS7 (156 aa).

The protein belongs to the universal ribosomal protein uS7 family. As to quaternary structure, part of the 30S ribosomal subunit. Contacts proteins S9 and S11.

Functionally, one of the primary rRNA binding proteins, it binds directly to 16S rRNA where it nucleates assembly of the head domain of the 30S subunit. Is located at the subunit interface close to the decoding center, probably blocks exit of the E-site tRNA. In Mycolicibacterium gilvum (strain PYR-GCK) (Mycobacterium gilvum (strain PYR-GCK)), this protein is Small ribosomal subunit protein uS7.